The chain runs to 203 residues: Imidazoleglycerol-phosphate dehydratase (203 aa).

The protein belongs to the imidazoleglycerol-phosphate dehydratase family.

It is found in the cytoplasm. The enzyme catalyses D-erythro-1-(imidazol-4-yl)glycerol 3-phosphate = 3-(imidazol-4-yl)-2-oxopropyl phosphate + H2O. Its pathway is amino-acid biosynthesis; L-histidine biosynthesis; L-histidine from 5-phospho-alpha-D-ribose 1-diphosphate: step 6/9. The chain is Imidazoleglycerol-phosphate dehydratase from Salinispora tropica (strain ATCC BAA-916 / DSM 44818 / JCM 13857 / NBRC 105044 / CNB-440).